A 538-amino-acid chain; its full sequence is Syncytin-1 (538 aa).

An N-terminal signal peptide occupies residues 1-20 (MALPYHILLFTVLLPSFTLT). Over 21–443 (APPPCRCMTS…NTGPWGLLSQ (423 aa)) the chain is Extracellular. N-linked (GlcNAc...) asparagine glycosylation is present at N169. Residues 186–189 (CWIC) carry the CXXC motif. Cystine bridges form between C186/C189, C186/C405, and C397/C404. N-linked (GlcNAc...) asparagine glycans are attached at residues N208, N214, N234, and N281. Residues 320 to 340 (ILPFVIGAGVLGALGTGIGGI) form a fusion peptide region. The immunosuppression stretch occupies residues 380 to 396 (LQNRRALDLLTAERGGT). The short motif at 397-405 (CLFLGEECC) is the CX6CC element. Residue N409 is glycosylated (N-linked (GlcNAc...) asparagine). Residues 444-464 (WMPWILPFLGPLAAIILLLLF) traverse the membrane as a helical segment. The essential for the fusiogenic function stretch occupies residues 465–484 (GPCIFNLLVNFVSSRIEAVK). The Cytoplasmic portion of the chain corresponds to 465-538 (GPCIFNLLVN…LLRPNSAGSS (74 aa)). The interval 496–538 (KIYRRPLDRPASPRSDVNDIKCTPPEEISTAQPLLRPNSAGSS) is disordered.

The protein belongs to the gamma type-C retroviral envelope protein family. HERV class-I W env subfamily. The mature envelope protein (Env) consists of a trimer of SU-TM heterodimers attached probably by a labile interchain disulfide bond. Interacts with the C-type lectin CD209/DC-SIGN. Specific enzymatic cleavages in vivo yield mature proteins. Envelope glycoproteins are synthesized as an inactive precursor that is heavily N-glycosylated and processed likely by furin in the Golgi to yield the mature SU and TM proteins. The cleavage site between SU and TM requires the minimal sequence [KR]-X-[KR]-R. Post-translationally, the CXXC motif is highly conserved across a broad range of retroviral envelope proteins. It is thought to participate in the formation of a labile disulfide bond possibly with the CX6CC motif present in the transmembrane protein.

The protein localises to the cell membrane. Its subcellular location is the virion. This endogenous retroviral envelope protein has retained its original fusogenic properties and participates in trophoblast fusion and the formation of a syncytium during placenta morphogenesis. May recognize and induce fusion through binding of SLC1A4 and SLC1A5. Functionally, endogenous envelope proteins may have kept, lost or modified their original function during evolution. Retroviral envelope proteins mediate receptor recognition and membrane fusion during early infection. The surface protein (SU) mediates receptor recognition, while the transmembrane protein (TM) acts as a class I viral fusion protein. The protein may have at least 3 conformational states: pre-fusion native state, pre-hairpin intermediate state, and post-fusion hairpin state. During viral and target cell membrane fusion, the coiled coil regions (heptad repeats) assume a trimer-of-hairpins structure, positioning the fusion peptide in close proximity to the C-terminal region of the ectodomain. The formation of this structure appears to drive apposition and subsequent fusion of membranes. This Gorilla gorilla gorilla (Western lowland gorilla) protein is Syncytin-1 (ERVW-1).